A 101-amino-acid polypeptide reads, in one-letter code: NAD(P)H-quinone oxidoreductase subunit 4L, chloroplastic (101 aa).

The next 3 membrane-spanning stretches (helical) occupy residues 2-22 (MLEYVLGLSAYLFSIGIYGLI), 32-52 (MCLELILNAVNINFVTFSDFF), and 61-81 (IFSIFVISIAAAEAAIGPAIV).

This sequence belongs to the complex I subunit 4L family. NDH is composed of at least 16 different subunits, 5 of which are encoded in the nucleus.

Its subcellular location is the plastid. The protein localises to the chloroplast thylakoid membrane. The enzyme catalyses a plastoquinone + NADH + (n+1) H(+)(in) = a plastoquinol + NAD(+) + n H(+)(out). The catalysed reaction is a plastoquinone + NADPH + (n+1) H(+)(in) = a plastoquinol + NADP(+) + n H(+)(out). In terms of biological role, NDH shuttles electrons from NAD(P)H:plastoquinone, via FMN and iron-sulfur (Fe-S) centers, to quinones in the photosynthetic chain and possibly in a chloroplast respiratory chain. The immediate electron acceptor for the enzyme in this species is believed to be plastoquinone. Couples the redox reaction to proton translocation, and thus conserves the redox energy in a proton gradient. In Populus trichocarpa (Western balsam poplar), this protein is NAD(P)H-quinone oxidoreductase subunit 4L, chloroplastic.